The primary structure comprises 299 residues: Myozenin-1 (299 aa).

The interval 1-34 (MPLSGTPAPNKKRKSSKLIMELTGGGQESSGLNL) is disordered. Phosphoserine is present on serine 82. The disordered stretch occupies residues 102-174 (GQGFSYSKSN…TGSGDQAGGE (73 aa)). Gly residues-rich tracts occupy residues 112-125 (GRGG…GSAG) and 137-173 (SGSG…QAGG).

It belongs to the myozenin family. In terms of assembly, interacts with ACTN2, ACTN3, FLNA, FLNB, FLNC, LDB3, PPP3CA and TCAP. Interacts via its C-terminal region with MYOT. In terms of tissue distribution, expressed primarily in skeletal muscle. Detected at lower levels in heart, prostate and pancreas.

It localises to the nucleus. It is found in the cell projection. The protein resides in the pseudopodium. Myozenins may serve as intracellular binding proteins involved in linking Z-disk proteins such as alpha-actinin, gamma-filamin, TCAP/telethonin, LDB3/ZASP and localizing calcineurin signaling to the sarcomere. Plays an important role in the modulation of calcineurin signaling. May play a role in myofibrillogenesis. The sequence is that of Myozenin-1 from Homo sapiens (Human).